The sequence spans 84 residues: Delta-conotoxin-like MVIB (84 aa).

The N-terminal stretch at 1–22 (MKLTCVMIVAVLFLTAWTFVTA) is a signal peptide. Residues 23-51 (DDSRYGLKDLFPKERHEMKNPEASKLNQR) constitute a propeptide that is removed on maturation. Intrachain disulfides connect Cys54-Cys69, Cys61-Cys73, and Cys68-Cys77. Pro65 carries the 4-hydroxyproline modification. Position 83 is a serine amide (Ser83).

This sequence belongs to the conotoxin O1 superfamily. In terms of tissue distribution, expressed by the venom duct.

It is found in the secreted. Its function is as follows. Delta-conotoxins bind to site 6 of voltage-gated sodium channels (Nav) and inhibit the inactivation process. This Conus magus (Magical cone) protein is Delta-conotoxin-like MVIB.